We begin with the raw amino-acid sequence, 210 residues long: Chaperone protein TorD (210 aa).

Belongs to the TorD/DmsD family. TorD subfamily.

The protein localises to the cytoplasm. Functionally, involved in the biogenesis of TorA. Acts on TorA before the insertion of the molybdenum cofactor and, as a result, probably favors a conformation of the apoenzyme that is competent for acquiring the cofactor. This is Chaperone protein TorD from Salmonella agona (strain SL483).